The primary structure comprises 413 residues: Divalent metal cation transporter MntH (413 aa).

A run of 11 helical transmembrane segments spans residues 19–39 (LALM…GNFA), 46–66 (ASFG…AMLI), 94–114 (VWFY…AEFI), 122–142 (LVLG…TFLI), 156–176 (VIGG…IFSQ), 196–216 (AVFL…IYLH), 241–261 (IAMT…AAAF), 290–310 (IFGL…TLAG), 329–349 (AITM…TRIL), 350–370 (VMSQ…LLIF), and 389–409 (IGWA…VGSL).

The protein belongs to the NRAMP family.

The protein resides in the cell inner membrane. H(+)-stimulated, divalent metal cation uptake system. In Klebsiella pneumoniae subsp. pneumoniae (strain ATCC 700721 / MGH 78578), this protein is Divalent metal cation transporter MntH.